We begin with the raw amino-acid sequence, 108 residues long: MSATIVNTTDENFQADVLDAETPVLVDFWAGWCAPCKAIAPVLEELSNEYAGKVKIVKVDVTSCEDTAVKYNIRNIPALLMFKDGEVVAQQVGAAPRSKLAAFIDQNI.

Residues 2–108 (SATIVNTTDE…KLAAFIDQNI (107 aa)) form the Thioredoxin domain. Cys-33 and Cys-36 are oxidised to a cystine.

This sequence belongs to the thioredoxin family.

Functionally, participates in various redox reactions through the reversible oxidation of its active center dithiol to a disulfide and catalyzes dithiol-disulfide exchange reactions. The protein is Thioredoxin C-2 of Corynebacterium nephridii.